The following is a 666-amino-acid chain: DNA mismatch repair protein MutL (666 aa).

The protein belongs to the DNA mismatch repair MutL/HexB family.

Functionally, this protein is involved in the repair of mismatches in DNA. It is required for dam-dependent methyl-directed DNA mismatch repair. May act as a 'molecular matchmaker', a protein that promotes the formation of a stable complex between two or more DNA-binding proteins in an ATP-dependent manner without itself being part of a final effector complex. This is DNA mismatch repair protein MutL from Clostridium botulinum (strain Loch Maree / Type A3).